The primary structure comprises 167 residues: Small ribosomal subunit protein uS3m (167 aa).

The N-terminal 35 residues, 1 to 35 (MAASVCSGLLGPRVLSWSRELPCAWRALHTSPVCA), are a transit peptide targeting the mitochondrion.

This sequence belongs to the universal ribosomal protein uS3 family. As to quaternary structure, component of the mitochondrial small ribosomal subunit (mt-SSU). Mature mammalian 55S mitochondrial ribosomes consist of a small (28S) and a large (39S) subunit. The 28S small subunit contains a 12S ribosomal RNA (12S mt-rRNA) and 30 different proteins. The 39S large subunit contains a 16S rRNA (16S mt-rRNA), a copy of mitochondrial valine transfer RNA (mt-tRNA(Val)), which plays an integral structural role, and 52 different proteins.

It is found in the mitochondrion. In Homo sapiens (Human), this protein is Small ribosomal subunit protein uS3m (MRPS24).